A 463-amino-acid polypeptide reads, in one-letter code: Quinolone resistance protein NorB (463 aa).

Helical transmembrane passes span 17 to 37 (IGIV…VNVV), 53 to 73 (IAVS…GGLA), 86 to 106 (IILN…LLLI), 107 to 127 (IGRL…LSII), 142 to 162 (YWSI…GAVA), 165 to 185 (LGWR…LFLI), 201 to 221 (FDIK…ILIT), 230 to 250 (SLLF…FIVL), 273 to 293 (TASN…NTFV), 299 to 319 (YSSL…LIMI), 334 to 354 (PMLI…LTFL), 357 to 377 (ILYV…LGIY), 403 to 423 (MASA…YAIV), and 435 to 455 (IALW…LLLV).

This sequence belongs to the major facilitator superfamily. TCR/Tet family.

The protein localises to the cell membrane. Multidrug efflux pump that acts independently of NorA and is one of the factors that confers resistance against diverse quinolones and chemical compounds. This Staphylococcus aureus (strain MSSA476) protein is Quinolone resistance protein NorB (norB).